We begin with the raw amino-acid sequence, 1140 residues long: Calcium-activated potassium channel slo-1 (1140 aa).

The Extracellular segment spans residues 1–44; it reads MGEIYSPSQSKGFNQPYGYPMNCNLSRVFMEMTEEDRKCLEERK. Residues 45 to 65 form a helical membrane-spanning segment; sequence YWCFLLSSITTFCASMILVVI. The Cytoplasmic portion of the chain corresponds to 66–139; sequence WRVVTHLCCQ…LISGQSLTGR (74 aa). Residues 140–161 form a helical membrane-spanning segment; sequence FLVLLVFILSIGSLIIYFYDAS. The Extracellular segment spans residues 162–178; the sequence is FQNFQVETCIPWQDSPS. Residues 179 to 199 form a helical membrane-spanning segment; it reads QQIDLGFNIFFLVYFFIRFIA. At 200-203 the chain is on the cytoplasmic side; sequence ASDK. Residues 204–224 form a helical membrane-spanning segment; the sequence is VWFLLEMYSWIDFFTIPPSFV. Over 225-228 the chain is Extracellular; sequence AIYL. A helical; Voltage-sensor transmembrane segment spans residues 229-249; the sequence is QRNWLGFRFLRALRLMTVPDI. Residues 250–264 lie on the Cytoplasmic side of the membrane; sequence LQYLNILKTSSSIRL. The chain crosses the membrane as a helical span at residues 265-285; it reads TQLVTIFVAVCLTGAGLVHLL. Topologically, residues 286-299 are extracellular; that stretch reads ENSGDFFKGFINPH. An intramembrane region (pore-forming) is located at residues 300-322; the sequence is RITYADSVYFVLVTMSTVGYGDI. The Selectivity for potassium motif lies at 316-319; the sequence is TVGY. Residues 323 to 331 are Extracellular-facing; it reads YCTTLCGRL. A helical membrane pass occupies residues 332–352; sequence FMIFFILFGLAMFASYVPEIA. Residues 353-1140 are Cytoplasmic-facing; that stretch reads DLIGNRQKYG…LEYEPGKRHF (788 aa). Positions 371 to 514 constitute an RCK N-terminal 1 domain; the sequence is KKHIVVCGHI…DWKRGDDVIC (144 aa). The segment at 520-540 is segment S7; sequence LGFIAQSCLAPGFSTMMANLF. Residues 578–598 form a segment S8 region; the sequence is MTFPEAVDLLFNRLGLLLLAI. The tract at residues 797–817 is segment S9; it reads VLNGHVVVCLFADQDSPLIGL. In terms of domain architecture, RCK N-terminal 2 spans 799–953; sequence NGHVVVCLFA…GAKFGTNVPM (155 aa). A Calcium bowl motif is present at residues 955–977; the sequence is TELVNDSNVQFLDQDDDDDPDTE. 4 residues coordinate Ca(2+): Gln-964, Asp-967, Asp-970, and Asp-972. The interval 984-1004 is segment S10; that stretch reads FACGTAFAISVLDSLMSTTYF.

It belongs to the potassium channel family. Calcium-activated (TC 1.A.1.3) subfamily. Slo sub-subfamily. In terms of assembly, homotetramer; which constitutes the calcium-activated potassium channel. In terms of processing, phosphorylated. In terms of tissue distribution, expressed in synaptic regions of the nervous system including in both the nerve ring and nerve cords, as well as in the body-wall and vulval muscle. Expressed broadly in motor neurons. Forms puncta at presynaptic terminals of neurons, muscle excitation sites, and in the dorsal nerve cord.

The protein localises to the cell membrane. It is found in the synapse. In terms of biological role, potassium channel activated by both membrane depolarization or increase in cytosolic Ca(2+) that mediates export of K(+). Its activation dampens the excitatory events that elevate the cytosolic Ca(2+) concentration and/or depolarize the cell membrane. It therefore contributes to repolarization of the membrane potential. Essential for the regulation of neurotransmitter release at synapses. Regulates longevity and age-associated decline in motor activity in mid-late life, by acting in motor neurons and through daf-16 in the intestine. When clustered in neurons, mediates ethanol-induced suppression of locomotory and egg-laying behaviors. The chain is Calcium-activated potassium channel slo-1 from Caenorhabditis elegans.